A 309-amino-acid polypeptide reads, in one-letter code: Ribonuclease Z (309 aa).

Residues His63, His65, Asp67, His68, His145, Asp216, and His274 each contribute to the Zn(2+) site. Asp67 serves as the catalytic Proton acceptor.

It belongs to the RNase Z family. As to quaternary structure, homodimer. It depends on Zn(2+) as a cofactor.

The catalysed reaction is Endonucleolytic cleavage of RNA, removing extra 3' nucleotides from tRNA precursor, generating 3' termini of tRNAs. A 3'-hydroxy group is left at the tRNA terminus and a 5'-phosphoryl group is left at the trailer molecule.. Zinc phosphodiesterase, which displays some tRNA 3'-processing endonuclease activity. Probably involved in tRNA maturation, by removing a 3'-trailer from precursor tRNA. The chain is Ribonuclease Z from Streptococcus uberis (strain ATCC BAA-854 / 0140J).